The chain runs to 299 residues: Pyridoxal 5'-phosphate synthase subunit PdxS (299 aa).

Position 24 (Asp-24) interacts with D-ribose 5-phosphate. Lys-81 acts as the Schiff-base intermediate with D-ribose 5-phosphate in catalysis. Gly-153 serves as a coordination point for D-ribose 5-phosphate. Arg-165 contributes to the D-glyceraldehyde 3-phosphate binding site. Residues Gly-219 and Gly-240–Ser-241 contribute to the D-ribose 5-phosphate site.

This sequence belongs to the PdxS/SNZ family. In the presence of PdxT, forms a dodecamer of heterodimers.

It catalyses the reaction aldehydo-D-ribose 5-phosphate + D-glyceraldehyde 3-phosphate + L-glutamine = pyridoxal 5'-phosphate + L-glutamate + phosphate + 3 H2O + H(+). It participates in cofactor biosynthesis; pyridoxal 5'-phosphate biosynthesis. Catalyzes the formation of pyridoxal 5'-phosphate from ribose 5-phosphate (RBP), glyceraldehyde 3-phosphate (G3P) and ammonia. The ammonia is provided by the PdxT subunit. Can also use ribulose 5-phosphate and dihydroxyacetone phosphate as substrates, resulting from enzyme-catalyzed isomerization of RBP and G3P, respectively. In Methanococcus maripaludis (strain C7 / ATCC BAA-1331), this protein is Pyridoxal 5'-phosphate synthase subunit PdxS.